The following is a 333-amino-acid chain: MAALAPPVAAIRRAIRHALIELPDPGPVLVACSGGADSLALAAATAFVAPRLGRSAGLVTVDHGLQEGSAQRAAAVADWARATGLAPVEVVRVDVSGRPGGPEAAARQARYRALTEVAGGLGAAALLTGHTRDDQAETVLLALARGAGPRGLAGMPARRWLGAALLLRPLLEVSREQTRAACTALGLDPWVDPHNADPAYARARVRAEVLPALVRALGPAVVDNLARTARLVAVDTAALDEQASTALDGVRHPDGGLSVGGLAALVPAVRGRVLHAWARELGARPAALSHRHVGALEALVTGWRGQGAAHLPGGLRVLRRAGRLTAIDPGAQV.

33–38 (SGGADS) provides a ligand contact to ATP.

It belongs to the tRNA(Ile)-lysidine synthase family.

The protein localises to the cytoplasm. It carries out the reaction cytidine(34) in tRNA(Ile2) + L-lysine + ATP = lysidine(34) in tRNA(Ile2) + AMP + diphosphate + H(+). Functionally, ligates lysine onto the cytidine present at position 34 of the AUA codon-specific tRNA(Ile) that contains the anticodon CAU, in an ATP-dependent manner. Cytidine is converted to lysidine, thus changing the amino acid specificity of the tRNA from methionine to isoleucine. This is tRNA(Ile)-lysidine synthase from Salinispora tropica (strain ATCC BAA-916 / DSM 44818 / JCM 13857 / NBRC 105044 / CNB-440).